A 506-amino-acid polypeptide reads, in one-letter code: Bifunctional purine biosynthesis protein PurH (506 aa).

The 142-residue stretch at 1 to 142 (MRAIISVYRK…KNFFRVVILV (142 aa)) folds into the MGS-like domain.

Belongs to the PurH family.

The catalysed reaction is (6R)-10-formyltetrahydrofolate + 5-amino-1-(5-phospho-beta-D-ribosyl)imidazole-4-carboxamide = 5-formamido-1-(5-phospho-D-ribosyl)imidazole-4-carboxamide + (6S)-5,6,7,8-tetrahydrofolate. The enzyme catalyses IMP + H2O = 5-formamido-1-(5-phospho-D-ribosyl)imidazole-4-carboxamide. Its pathway is purine metabolism; IMP biosynthesis via de novo pathway; 5-formamido-1-(5-phospho-D-ribosyl)imidazole-4-carboxamide from 5-amino-1-(5-phospho-D-ribosyl)imidazole-4-carboxamide (10-formyl THF route): step 1/1. It participates in purine metabolism; IMP biosynthesis via de novo pathway; IMP from 5-formamido-1-(5-phospho-D-ribosyl)imidazole-4-carboxamide: step 1/1. The chain is Bifunctional purine biosynthesis protein PurH from Aquifex aeolicus (strain VF5).